A 104-amino-acid chain; its full sequence is PTS system lactose-specific EIIA component (104 aa).

The region spanning 4-102 (EEATLLGFEI…MKHLIELYKR (99 aa)) is the PTS EIIA type-3 domain. The Tele-phosphohistidine intermediate role is filled by histidine 78. Residue histidine 78 is modified to Phosphohistidine; by HPr. Mg(2+) is bound at residue aspartate 81.

Homotrimer. The cofactor is Mg(2+).

It localises to the cytoplasm. In terms of biological role, the phosphoenolpyruvate-dependent sugar phosphotransferase system (sugar PTS), a major carbohydrate active transport system, catalyzes the phosphorylation of incoming sugar substrates concomitantly with their translocation across the cell membrane. The enzyme II LacEF PTS system is involved in lactose transport. The protein is PTS system lactose-specific EIIA component of Streptococcus mutans serotype c (strain ATCC 700610 / UA159).